The sequence spans 225 residues: Cytidylate kinase (225 aa).

11 to 19 is an ATP binding site; the sequence is GPAAAGKST.

The protein belongs to the cytidylate kinase family. Type 1 subfamily.

Its subcellular location is the cytoplasm. It catalyses the reaction CMP + ATP = CDP + ADP. The catalysed reaction is dCMP + ATP = dCDP + ADP. In Anoxybacillus flavithermus (strain DSM 21510 / WK1), this protein is Cytidylate kinase.